We begin with the raw amino-acid sequence, 105 residues long: uncharacterized protein (105 aa).

The Cupin type-2 domain occupies 33 to 100; sequence LYALDAGTTD…SEDLRVLVVF (68 aa).

This is an uncharacterized protein from Streptomyces coelicolor (strain ATCC BAA-471 / A3(2) / M145).